The following is a 66-amino-acid chain: Cold shock protein CspB (66 aa).

The CSD domain occupies 4–63; that stretch reads GKVKWFNNEKGYGFIEVEGGSDVFVHFTAIQGEGFKTLEEGQEVSFEIVQGNRGPQAANV.

As to quaternary structure, homodimer.

The protein resides in the cytoplasm. Its function is as follows. Affects cell viability at low temperatures. In Bacillus caldolyticus, this protein is Cold shock protein CspB (cspB).